Consider the following 200-residue polypeptide: uncharacterized protein (200 aa).

This sequence belongs to the HAD-like hydrolase superfamily. CbbY/CbbZ/Gph/YieH family.

This is an uncharacterized protein from Haemophilus influenzae (strain ATCC 51907 / DSM 11121 / KW20 / Rd).